The sequence spans 640 residues: (Z)-beta-ocimene synthase TPS13PK, chloroplastic (640 aa).

The transit peptide at 1 to 95 (MAALVSTVSS…PFKDEAYVKR (95 aa)) directs the protein to the chloroplast. Residues 50–69 (MSTNNNNNNNQKNSSRRSAN) are disordered. The segment covering 60-69 (QKNSSRRSAN) has biased composition (polar residues). The (2E)-geranyl diphosphate site is built by Arg-334, Asp-371, Asp-375, Arg-515, and Asp-518. Residues Asp-371 and Asp-375 each contribute to the Mg(2+) site. The short motif at 371 to 375 (DDIYD) is the DDXXD motif element. Mg(2+) contacts are provided by Asp-518, Thr-522, and Glu-526.

The protein belongs to the terpene synthase family. Monomer. It depends on Mg(2+) as a cofactor.

The protein resides in the plastid. It is found in the chloroplast. It carries out the reaction (2E)-geranyl diphosphate = (Z)-beta-ocimene + diphosphate. Its pathway is secondary metabolite biosynthesis; terpenoid biosynthesis. Involved in monoterpene (C10) olefins biosynthesis, constituants of cannabinoids and terpenoids-rich resins. Catalyzes mainly the conversion of (2E)-geranyl diphosphate to (Z)-beta-ocimene. In Cannabis sativa (Hemp), this protein is (Z)-beta-ocimene synthase TPS13PK, chloroplastic.